We begin with the raw amino-acid sequence, 205 residues long: Thymidylate kinase (205 aa).

9 to 16 (GPEGSGKT) contributes to the ATP binding site.

It belongs to the thymidylate kinase family.

The enzyme catalyses dTMP + ATP = dTDP + ADP. Its function is as follows. Phosphorylation of dTMP to form dTDP in both de novo and salvage pathways of dTTP synthesis. This chain is Thymidylate kinase, found in Staphylococcus aureus (strain NCTC 8325 / PS 47).